We begin with the raw amino-acid sequence, 113 residues long: uncharacterized protein (113 aa).

This is an uncharacterized protein from Saccharomyces cerevisiae (strain ATCC 204508 / S288c) (Baker's yeast).